Consider the following 390-residue polypeptide: Dual-specificity RNA methyltransferase RlmN (390 aa).

Glu-110 (proton acceptor) is an active-site residue. Residues 116-355 (EADRATLCVS…VIIRKTRGDD (240 aa)) enclose the Radical SAM core domain. A disulfide bond links Cys-123 and Cys-360. [4Fe-4S] cluster-binding residues include Cys-130, Cys-134, and Cys-137. Residues 184-185 (GE), Ser-216, 238-240 (SLH), and Asn-317 contribute to the S-adenosyl-L-methionine site. Catalysis depends on Cys-360, which acts as the S-methylcysteine intermediate.

This sequence belongs to the radical SAM superfamily. RlmN family. [4Fe-4S] cluster serves as cofactor.

Its subcellular location is the cytoplasm. It catalyses the reaction adenosine(2503) in 23S rRNA + 2 reduced [2Fe-2S]-[ferredoxin] + 2 S-adenosyl-L-methionine = 2-methyladenosine(2503) in 23S rRNA + 5'-deoxyadenosine + L-methionine + 2 oxidized [2Fe-2S]-[ferredoxin] + S-adenosyl-L-homocysteine. It carries out the reaction adenosine(37) in tRNA + 2 reduced [2Fe-2S]-[ferredoxin] + 2 S-adenosyl-L-methionine = 2-methyladenosine(37) in tRNA + 5'-deoxyadenosine + L-methionine + 2 oxidized [2Fe-2S]-[ferredoxin] + S-adenosyl-L-homocysteine. Its function is as follows. Specifically methylates position 2 of adenine 2503 in 23S rRNA and position 2 of adenine 37 in tRNAs. m2A2503 modification seems to play a crucial role in the proofreading step occurring at the peptidyl transferase center and thus would serve to optimize ribosomal fidelity. This is Dual-specificity RNA methyltransferase RlmN from Haemophilus influenzae (strain 86-028NP).